Consider the following 1108-residue polypeptide: MLRIRRRFALVICSGCLLVFLSLYIILNFAAPAATQIKPNYENIENKLHELENGLQEHGEEMRNLRARLAETSNRDDPIRPPLKVARSPRPGQCQDVVQDVPNVDVQMLELYDRMSFKDIDGGVWKQGWNIKYDPLKYNAHHKLKVFVVPHSHNDPGWIQTFEEYYQHDTKHILSNALRHLHDNPEMKFIWAEISYFARFYHDLGENKKLQMKSIVKNGQLEFVTGGWVMPDEANSHWRNVLLQLTEGQTWLKQFMNVTPTASWAIDPFGHSPTMPYILQKSGFKNMLIQRTHYSVKKELAQQRQLEFLWRQIWDNKGDTALFTHMMPFYSYDIPHTCGPDPKVCCQFDFKRMGSFGLSCPWKVPPRTISDQNVAARSDLLVDQWKKKAELYRTNVLLIPLGDDFRFKQNTEWDVQRVNYERLFEHINSQAHFNVQAQFGTLQEYFDAVHQAERAGQAEFPTLSGDFFTYADRSDNYWSGYYTSRPYHKRMDRVLMHYVRAAEMLSAWHSWDGMARIEERLEQARRELSLFQHHDGITGTAKTHVVVDYEQRMQEALKACQMVMQQSVYRLLTKPSIYSPDFSFSYFTLDDSRWPGSGVEDSRTTIILGEDILPSKHVVMHNTLPHWREQLVDFYVSSPFVSVTDLANNPVEAQVSPVWSWHHDTLTKTIHPQGSTTKYRIIFKARVPPMGLATYVLTISDSKPEHTSYASNLLLRKNPTSLPLGQYPEDVKFGDPREISLRVGNGPTLAFSEQGLLKSIQLTQDSPHVPVHFKFLKYGVRSHGDRSGAYLFLPNGPASPVELGQPVVLVTKGKLESSVSVGLPSVVHQTIMRGGAPEIRNLVDIGSLDNTEIVMRLETHIDSGDIFYTDLNGLQFIKRRRLDKLPLQANYYPIPSGMFIEDANTRLTLLTGQPLGGSSLASGELEIMQDRRLASDDERGLGQGVLDNKPVLHIYRLVLEKVNNCVRPSELHPAGYLTSAAHKASQSLLDPLDKFIFAENEWIGAQGQFGGDHPSAREDLDVSVMRRLTKSSAKTQRVGYVLHRTNLMQCGTPEEHTQKLDVCHLLPNVARCERTTLTFLQNLEHLDGMVAPEVCPMETAAYVSSHSS.

At 1-9 (MLRIRRRFA) the chain is on the cytoplasmic side. Residues 10–30 (LVICSGCLLVFLSLYIILNFA) traverse the membrane as a helical; Signal-anchor for type II membrane protein segment. At 31–1108 (APAATQIKPN…TAAYVSSHSS (1078 aa)) the chain is on the lumenal side. Residues 70-92 (AETSNRDDPIRPPLKVARSPRPG) form a disordered region. Zn(2+)-binding residues include H153, D155, D267, and H534. D267 serves as the catalytic Nucleophile.

It belongs to the glycosyl hydrolase 38 family. As to quaternary structure, homodimer; disulfide-linked. It depends on Zn(2+) as a cofactor.

Its subcellular location is the golgi apparatus membrane. It carries out the reaction N(4)-{beta-D-GlcNAc-(1-&gt;2)-alpha-D-Man-(1-&gt;3)-[alpha-D-Man-(1-&gt;3)-[alpha-D-Man-(1-&gt;6)]-alpha-D-Man-(1-&gt;6)]-beta-D-Man-(1-&gt;4)-beta-D-GlcNAc-(1-&gt;4)-beta-D-GlcNAc}-L-asparaginyl-[protein] + 2 H2O = 2 alpha-D-mannopyranose + an N(4)-{beta-D-GlcNAc-(1-&gt;2)-alpha-D-Man-(1-&gt;3)-[alpha-D-Man-(1-&gt;6)]-beta-D-Man-(1-&gt;4)-beta-D-GlcNAc-(1-&gt;4)-beta-D-GlcNAc}-L-asparaginyl-[protein]. It participates in protein modification; protein glycosylation. Functionally, catalyzes the first committed step in the biosynthesis of complex N-glycans. It controls conversion of high mannose to complex N-glycans; the final hydrolytic step in the N-glycan maturation pathway. The polypeptide is Alpha-mannosidase 2 (Drosophila melanogaster (Fruit fly)).